The sequence spans 768 residues: P-selectin (768 aa).

An N-terminal signal peptide occupies residues 1-41 (MAGCPKGSWTPRLRSVILGGAQLIWFSALISELVNQKEVAA). At 42-709 (WTYNYSTKAY…QAGTLTIQEA (668 aa)) the chain is on the extracellular side. The region spanning 58–158 (VFCRRHFTDL…PCFKRKRALC (101 aa)) is the C-type lectin domain. Cystine bridges form between Cys-60–Cys-158, Cys-131–Cys-150, Cys-163–Cys-174, Cys-168–Cys-183, Cys-185–Cys-194, Cys-200–Cys-244, Cys-230–Cys-257, Cys-262–Cys-306, Cys-292–Cys-319, Cys-324–Cys-368, Cys-354–Cys-381, Cys-386–Cys-430, Cys-416–Cys-443, Cys-448–Cys-492, Cys-478–Cys-505, Cys-510–Cys-554, Cys-540–Cys-567, Cys-580–Cys-624, Cys-610–Cys-637, Cys-642–Cys-686, and Cys-672–Cys-699. 3 residues coordinate Ca(2+): Glu-121, Asn-123, and Asn-124. Asn-123 contacts a carbohydrate. Residues Glu-133 and Asn-146 each coordinate a carbohydrate. Residues Asn-146 and Asp-147 each contribute to the Ca(2+) site. Residues 159 to 195 (YTASCQDMSCSNQGECIETIGSYTCSCYPGFYGPECE) enclose the EGF-like domain. Sushi domains lie at 198–259 (KECG…KCDA), 260–321 (VQCQ…TCEA), 322–383 (IACE…FCEA), 384–445 (LQCP…ECQA), 446–507 (VSCA…TCEA), 508–569 (IKCP…TCKG), 578–639 (VRCP…MCRA), and 640–701 (VKCS…TCQA). Asn-398 carries N-linked (GlcNAc...) asparagine glycosylation. The N-linked (GlcNAc...) asparagine glycan is linked to Asn-603. N-linked (GlcNAc...) asparagine glycans are attached at residues Asn-654, Asn-661, and Asn-679. The chain crosses the membrane as a helical span at residues 710-733 (LTYLGGAVASTTGLAVGGTLLALL). The Cytoplasmic segment spans residues 734-768 (RKRLRKKDDGKCPLNPHSHLGTYGVFTNAAYDPTP). Residue Cys-745 is the site of S-palmitoyl cysteine; alternate attachment. Residue Cys-745 is the site of S-stearoyl cysteine; alternate attachment. An Endocytosis signal motif is present at residues 756-759 (YGVF). The tract at residues 759–768 (FTNAAYDPTP) is interaction with SNX17.

This sequence belongs to the selectin/LECAM family. Interacts with SNX17. Interacts with SELPLG/PSGL1 and PODXL2 and mediates neutrophil adhesion and leukocyte rolling. This interaction requires the sialyl-Lewis X epitope of SELPLG and PODXL2, and specific tyrosine sulfation on SELPLG. Interacts (via C-type lectin domain) with alpha-IIb/beta3 integrin ITGA2B:ITGB3 and alpha-V/beta-3 integrin ITGAV:ITGB3. Interacts with alpha5/beta1 integrin ITGA5:ITGB1 and alpha4/beta1 integrin ITGA4:ITGB. In terms of tissue distribution, stored in the alpha-granules of platelets and Weibel-Palade bodies of endothelial cells. Upon cell activation by agonists, P-selectin is transported rapidly to the cell surface.

Its subcellular location is the cell membrane. Ca(2+)-dependent receptor for myeloid cells that binds to carbohydrates on neutrophils and monocytes. Mediates the interaction of activated endothelial cells or platelets with leukocytes. The ligand recognized is sialyl-Lewis X. Mediates rapid rolling of leukocyte rolling over vascular surfaces during the initial steps in inflammation through interaction with SELPLG. Mediates cell-cell interactions and cell adhesion via the interaction with integrin alpha-IIb/beta3 (ITGA2B:ITGB3) and integrin alpha-V/beta-3 (ITGAV:ITGB3). This is P-selectin (Selp) from Mus musculus (Mouse).